We begin with the raw amino-acid sequence, 293 residues long: Energy-coupling factor transporter ATP-binding protein EcfA2 (293 aa).

The ABC transporter domain occupies 3 to 246 (ITFQKVEHRY…ADELEKIGVD (244 aa)). 40–47 (GHTGSGKS) is a binding site for ATP.

This sequence belongs to the ABC transporter superfamily. Energy-coupling factor EcfA family. As to quaternary structure, forms a stable energy-coupling factor (ECF) transporter complex composed of 2 membrane-embedded substrate-binding proteins (S component), 2 ATP-binding proteins (A component) and 2 transmembrane proteins (T component).

It localises to the cell membrane. Functionally, ATP-binding (A) component of a common energy-coupling factor (ECF) ABC-transporter complex. Unlike classic ABC transporters this ECF transporter provides the energy necessary to transport a number of different substrates. In Bacillus cereus (strain ATCC 14579 / DSM 31 / CCUG 7414 / JCM 2152 / NBRC 15305 / NCIMB 9373 / NCTC 2599 / NRRL B-3711), this protein is Energy-coupling factor transporter ATP-binding protein EcfA2.